Consider the following 336-residue polypeptide: C2H2 finger domain transcription factor mtfA (336 aa).

The tract at residues 1 to 245 is disordered; it reads MDVASLISPS…PSPGHQQMIS (245 aa). Polar residues-rich tracts occupy residues 7-29 and 36-56; these read ISPS…SSAS and EQST…YSRT. Over residues 136 to 149 the composition is skewed to low complexity; that stretch reads SPSTSSVSAASSSA. Positions 168-181 are enriched in polar residues; it reads TDRSSISSQGSVQH. Over residues 182–210 the composition is skewed to low complexity; it reads AASAPYASPAPSVSSFSSPIEPSTPSTAA. The segment covering 216–245 has biased composition (polar residues); sequence PAPNTFQNPSPFPQTSTASLPSPGHQQMIS. C2H2-type zinc fingers lie at residues 272–294 and 300–325; these read YICR…SHSH and FRCT…RGCH.

The protein resides in the nucleus. Its function is as follows. Transcription factor that controls morphogenesis and virulence. Acts as a positive regulator of gliotixin and protease production. The protein is C2H2 finger domain transcription factor mtfA of Aspergillus fumigatus (strain CBS 144.89 / FGSC A1163 / CEA10) (Neosartorya fumigata).